The chain runs to 431 residues: Serine--tRNA ligase (431 aa).

237–239 contributes to the L-serine binding site; that stretch reads TAE. 268–270 contacts ATP; sequence RSE. An L-serine-binding site is contributed by Glu291. Position 355–358 (355–358) interacts with ATP; it reads EISS. Residue Ser390 participates in L-serine binding.

It belongs to the class-II aminoacyl-tRNA synthetase family. Type-1 seryl-tRNA synthetase subfamily. Homodimer. The tRNA molecule binds across the dimer.

It localises to the cytoplasm. The catalysed reaction is tRNA(Ser) + L-serine + ATP = L-seryl-tRNA(Ser) + AMP + diphosphate + H(+). The enzyme catalyses tRNA(Sec) + L-serine + ATP = L-seryl-tRNA(Sec) + AMP + diphosphate + H(+). Its pathway is aminoacyl-tRNA biosynthesis; selenocysteinyl-tRNA(Sec) biosynthesis; L-seryl-tRNA(Sec) from L-serine and tRNA(Sec): step 1/1. Functionally, catalyzes the attachment of serine to tRNA(Ser). Is also able to aminoacylate tRNA(Sec) with serine, to form the misacylated tRNA L-seryl-tRNA(Sec), which will be further converted into selenocysteinyl-tRNA(Sec). This chain is Serine--tRNA ligase, found in Neisseria meningitidis serogroup B (strain ATCC BAA-335 / MC58).